The sequence spans 508 residues: uncharacterized protein (508 aa).

A helical membrane pass occupies residues 7–29; sequence ALAIVLALILSLALPELLFQLYP.

The protein localises to the membrane. This is an uncharacterized protein from Archaeoglobus fulgidus (strain ATCC 49558 / DSM 4304 / JCM 9628 / NBRC 100126 / VC-16).